The sequence spans 329 residues: Putative glucose ABC transporter permease protein TsgC13 (329 aa).

A run of 7 helical transmembrane segments spans residues 3 to 23 (FAAGLLNATVQAATVLLLAGL), 32 to 52 (GVLNLGVEGMMLVGALGGFVV), 60 to 80 (WLGFGVGIACGMALAAVHAFL), 89 to 109 (VISGVMLTLLGTGLTTFFGSG), 139 to 161 (AFFRSTATDYLALLAVPVVWFFL), 193 to 213 (LAVIIGGGFAGAAGAHLSLAF), and 216 to 236 (LWVPGMTVGRGWIAVALVVFA).

It belongs to the binding-protein-dependent transport system permease family. As to quaternary structure, the complex is composed of two ATP-binding proteins (TsgD13), two transmembrane proteins (TsgB13 and TsgC13) and a solute-binding protein (TsgA13).

The protein resides in the cell membrane. Its function is as follows. Part of an ABC transporter complex involved in glucose import (Potential). Responsible for the translocation of the substrate across the membrane. In Haloferax volcanii (strain ATCC 29605 / DSM 3757 / JCM 8879 / NBRC 14742 / NCIMB 2012 / VKM B-1768 / DS2) (Halobacterium volcanii), this protein is Putative glucose ABC transporter permease protein TsgC13 (tsgC13).